The sequence spans 225 residues: Thymidine kinase (225 aa).

ATP is bound at residue 8-15; that stretch reads GPMFSGKT. Glutamate 92 (proton acceptor) is an active-site residue. Tyrosine 122 serves as a coordination point for substrate. Cysteine 147 and cysteine 150 together coordinate Zn(2+). 167–171 is a substrate binding site; sequence KILVG. Residues cysteine 180 and cysteine 183 each coordinate Zn(2+). Polar residues predominate over residues 197–207; that stretch reads SEQINNQTELS. Positions 197-225 are disordered; the sequence is SEQINNQTELSEPTRQKESLKIKKRRIDS. The segment covering 208 to 225 has biased composition (basic and acidic residues); that stretch reads EPTRQKESLKIKKRRIDS.

Belongs to the thymidine kinase family.

The enzyme catalyses thymidine + ATP = dTMP + ADP + H(+). This Acanthamoeba polyphaga mimivirus (APMV) protein is Thymidine kinase (TK).